Here is a 227-residue protein sequence, read N- to C-terminus: ATP-dependent dethiobiotin synthetase BioD (227 aa).

An ATP-binding site is contributed by 13-18 (EVGKSV). Mg(2+) is bound at residue serine 17. The active site involves lysine 38. Serine 42 serves as a coordination point for substrate. ATP-binding positions include aspartate 55, 116–119 (EGAG), and 176–177 (ND). Mg(2+)-binding residues include aspartate 55 and glutamate 116.

The protein belongs to the dethiobiotin synthetase family. Homodimer. The cofactor is Mg(2+).

The protein localises to the cytoplasm. The catalysed reaction is (7R,8S)-7,8-diammoniononanoate + CO2 + ATP = (4R,5S)-dethiobiotin + ADP + phosphate + 3 H(+). It functions in the pathway cofactor biosynthesis; biotin biosynthesis; biotin from 7,8-diaminononanoate: step 1/2. Its function is as follows. Catalyzes a mechanistically unusual reaction, the ATP-dependent insertion of CO2 between the N7 and N8 nitrogen atoms of 7,8-diaminopelargonic acid (DAPA, also called 7,8-diammoniononanoate) to form a ureido ring. This Serratia marcescens protein is ATP-dependent dethiobiotin synthetase BioD.